We begin with the raw amino-acid sequence, 357 residues long: Quinolinate synthase (357 aa).

The iminosuccinate site is built by H50 and S71. C116 serves as a coordination point for [4Fe-4S] cluster. Iminosuccinate-binding positions include 142–144 (YAN) and S159. C203 contributes to the [4Fe-4S] cluster binding site. Residues 229-231 (HPE) and T246 contribute to the iminosuccinate site. Residue C300 coordinates [4Fe-4S] cluster.

Belongs to the quinolinate synthase family. Type 1 subfamily. The cofactor is [4Fe-4S] cluster.

The protein localises to the cytoplasm. The enzyme catalyses iminosuccinate + dihydroxyacetone phosphate = quinolinate + phosphate + 2 H2O + H(+). The protein operates within cofactor biosynthesis; NAD(+) biosynthesis; quinolinate from iminoaspartate: step 1/1. Catalyzes the condensation of iminoaspartate with dihydroxyacetone phosphate to form quinolinate. This Shewanella sp. (strain ANA-3) protein is Quinolinate synthase.